The sequence spans 1872 residues: Plexin-A3 (1872 aa).

The N-terminal stretch at 1–19 is a signal peptide; sequence MHTVCLLPLLFFTIGGCLG. In terms of domain architecture, Sema spans 20 to 489; that stretch reads SSRPFRTFVV…SEKQVSQLPV (470 aa). Residues 20–1220 are Extracellular-facing; that stretch reads SSRPFRTFVV…ITADRALTLP (1201 aa). Asparagine 60 carries N-linked (GlcNAc...) asparagine glycosylation. Intrachain disulfides connect cysteine 78/cysteine 87, cysteine 113/cysteine 121, cysteine 267/cysteine 388, cysteine 283/cysteine 339, cysteine 357/cysteine 376, cysteine 492/cysteine 509, cysteine 498/cysteine 540, cysteine 501/cysteine 518, and cysteine 512/cysteine 524. N-linked (GlcNAc...) asparagine glycosylation occurs at asparagine 549. Residues cysteine 575 and cysteine 595 are joined by a disulfide bond. IPT/TIG domains lie at 841–934, 936–1021, 1024–1123, and 1126–1212; these read PRIT…YSFV, PTLD…YTYT, PTVT…FTYY, and PSFE…LHIT. N-linked (GlcNAc...) asparagine glycosylation occurs at asparagine 1163. A helical membrane pass occupies residues 1221 to 1241; sequence AMVGLAAGGGLLLLAITVVLV. The stretch at 1240 to 1294 forms a coiled coil; sequence LVAYKRKTQDADRTLKRLQLQMDNLESRVALECKEAFAELQTDINELTNHMDGVQ. The Cytoplasmic segment spans residues 1242-1872; sequence AYKRKTQDAD…QIITLVSSSS (631 aa). Serine 1597 is subject to Phosphoserine.

Belongs to the plexin family.

The protein localises to the cell membrane. In terms of biological role, coreceptor for SEMA3A and SEMA3F. Necessary for signaling by class 3 semaphorins and subsequent remodeling of the cytoskeleton. Plays a role in axon guidance in the developing nervous system. Regulates the migration of sympathetic neurons, but not of neural crest precursors. Required for normal dendrite spine morphology in pyramidal neurons. May play a role in regulating semaphorin-mediated programmed cell death in the developing nervous system. Class 3 semaphorins bind to a complex composed of a neuropilin and a plexin. The plexin modulates the affinity of the complex for specific semaphorins, and its cytoplasmic domain is required for the activation of down-stream signaling events in the cytoplasm. The protein is Plexin-A3 (Plxna3) of Rattus norvegicus (Rat).